The sequence spans 144 residues: Large ribosomal subunit protein uL15 (144 aa).

The span at 1–14 (MVVRREKKSRKMRG) shows a compositional bias: basic residues. The disordered stretch occupies residues 1–35 (MVVRREKKSRKMRGSRTMGWGIRGQHRDRGSQGGR).

Belongs to the universal ribosomal protein uL15 family. As to quaternary structure, part of the 50S ribosomal subunit.

Functionally, binds to the 23S rRNA. The sequence is that of Large ribosomal subunit protein uL15 from Saccharolobus solfataricus (strain ATCC 35092 / DSM 1617 / JCM 11322 / P2) (Sulfolobus solfataricus).